Here is a 357-residue protein sequence, read N- to C-terminus: Glutamine synthetase root isozyme 5 (357 aa).

The GS beta-grasp domain occupies 19–99; sequence IIAEYIWVGG…VMCDCYTPQG (81 aa). The 252-residue stretch at 106–357 folds into the GS catalytic domain; sequence KRYKAATVFS…ADTTILWKGN (252 aa).

This sequence belongs to the glutamine synthetase family. As to quaternary structure, homooctamer. In terms of tissue distribution, found mainly in the cortical tissues of seedling roots, stem and seedling shoot.

It localises to the cytoplasm. The enzyme catalyses L-glutamate + NH4(+) + ATP = L-glutamine + ADP + phosphate + H(+). Plays a role in the flow of nitrogen into nitrogenous organic compounds. The polypeptide is Glutamine synthetase root isozyme 5 (GS1-5) (Zea mays (Maize)).